A 330-amino-acid polypeptide reads, in one-letter code: PDZ and LIM domain protein 4 (330 aa).

The PDZ domain maps to Met1 to Glu84. The tract at residues Ile104–Arg180 is disordered. Over residues Gly111–Gly121 the composition is skewed to low complexity. Phosphoserine is present on residues Ser112, Ser116, Ser120, and Ser135. Residues Asn148–His163 are compositionally biased toward polar residues. Residues Pro253 to Pro312 enclose the LIM zinc-binding domain.

In terms of assembly, homodimer. Interacts with PTPN13. Interacts (via C-terminus only or via combined C-terminus and LIM domain, but not LIM domain only) with PTPN13 (via the second or fourth PDZ domains). Found in a complex with PTPN13 and TRIP6. Interacts (via PDZ domain) with ACTN1 and ACTN2 (via C-terminal SDL residues). Interacts (via PDZ domain) with TRIP6 (via the second LIM domain or via the third LIM domain plus C-terminus). Interacts (via LIM domain) with GRIA1 (via C-terminus); this interaction as well as the interaction with alpha-actinin is required for their colocalization in early endosomes. Interacts with PDLIM1. Forms (via LIM domain) a heterodimer with PDLIM3. Interacts directly with SRC (via kinase domain and to a lesser extent the SH2 domain). Isoform 2 interacts with NQO1. NQO1-stabilized isoform 2 heterodimerizes with isoform 1. In terms of processing, phosphorylated on tyrosine residue(s). Can be dephosphorylated by PTPN13. Found in brain.

It localises to the cytoplasm. It is found in the cytoskeleton. The protein resides in the nucleus. The protein localises to the perinuclear region. Its subcellular location is the cell projection. It localises to the lamellipodium. It is found in the dendritic spine. The protein resides in the early endosome membrane. The protein localises to the recycling endosome membrane. Its subcellular location is the synapse. It localises to the synaptosome. Suppresses SRC activation by recognizing and binding to active SRC and facilitating PTPN13-mediated dephosphorylation of SRC 'Tyr-419' leading to its inactivation. Inactivated SRC dissociates from this protein allowing the initiation of a new SRC inactivation cycle. Involved in reorganization of the actin cytoskeleton. In nonmuscle cells, binds to ACTN1 (alpha-actinin-1), increases the affinity of ACTN1 to F-actin (filamentous actin), and promotes formation of actin stress fibers. Involved in regulation of the synaptic AMPA receptor transport in dendritic spines of hippocampal pyramidal neurons directing the receptors toward an insertion at the postsynaptic membrane. Links endosomal surface-internalized GRIA1-containing AMPA receptors to the alpha-actinin/actin cytoskeleton. Increases AMPA receptor-mediated excitatory postsynaptic currents in neurons. In terms of biological role, involved in reorganization of the actin cytoskeleton and in regulation of cell migration. In response to oxidative stress, binds to NQO1, which stabilizes it and protects it from ubiquitin-independent degradation by the core 20S proteasome. Stabilized protein is able to heterodimerize with isoform 1 changing the subcellular location of it from cytoskeleton and nuclei to cytosol, leading to loss of isoforms 1 ability to induce formation of actin stress fibers. Counteracts the effects produced by isoform 1 on organization of actin cytoskeleton and cell motility to fine-tune actin cytoskeleton rearrangement and to attenuate cell migration. The chain is PDZ and LIM domain protein 4 (PDLIM4) from Homo sapiens (Human).